The following is a 126-amino-acid chain: Aspartate 1-decarboxylase (126 aa).

Serine 25 functions as the Schiff-base intermediate with substrate; via pyruvic acid in the catalytic mechanism. A Pyruvic acid (Ser) modification is found at serine 25. Threonine 57 is a binding site for substrate. The Proton donor role is filled by tyrosine 58. 73–75 (GAA) contacts substrate.

This sequence belongs to the PanD family. As to quaternary structure, heterooctamer of four alpha and four beta subunits. Pyruvate is required as a cofactor. In terms of processing, is synthesized initially as an inactive proenzyme, which is activated by self-cleavage at a specific serine bond to produce a beta-subunit with a hydroxyl group at its C-terminus and an alpha-subunit with a pyruvoyl group at its N-terminus.

The protein resides in the cytoplasm. It catalyses the reaction L-aspartate + H(+) = beta-alanine + CO2. It participates in cofactor biosynthesis; (R)-pantothenate biosynthesis; beta-alanine from L-aspartate: step 1/1. Functionally, catalyzes the pyruvoyl-dependent decarboxylation of aspartate to produce beta-alanine. The chain is Aspartate 1-decarboxylase from Salmonella choleraesuis (strain SC-B67).